A 293-amino-acid polypeptide reads, in one-letter code: Triosephosphate isomerase (293 aa).

25-27 is a substrate binding site; the sequence is NWK. His117 acts as the Electrophile in catalysis. Glu218 (proton acceptor) is an active-site residue.

Belongs to the triosephosphate isomerase family. Homodimer.

It localises to the cytoplasm. It carries out the reaction D-glyceraldehyde 3-phosphate = dihydroxyacetone phosphate. The protein operates within carbohydrate biosynthesis; gluconeogenesis. It functions in the pathway carbohydrate degradation; glycolysis; D-glyceraldehyde 3-phosphate from glycerone phosphate: step 1/1. Involved in the gluconeogenesis. Catalyzes stereospecifically the conversion of dihydroxyacetone phosphate (DHAP) to D-glyceraldehyde-3-phosphate (G3P). The polypeptide is Triosephosphate isomerase (Tropheryma whipplei (strain TW08/27) (Whipple's bacillus)).